Consider the following 631-residue polypeptide: Protein FRIABLE 1 (631 aa).

Over residues 1–13 the composition is skewed to low complexity; sequence MSVGVPVNPSSSS. Positions 1–36 are disordered; that stretch reads MSVGVPVNPSSSSQLPAAPTTTTRRRVADSQEDHSH. Residues 1–120 are Cytoplasmic-facing; it reads MSVGVPVNPS…NMRSTTNLGR (120 aa). Residues 26 to 36 show a composition bias toward basic and acidic residues; the sequence is RVADSQEDHSH. The helical; Signal-anchor for type II membrane protein transmembrane segment at 121–141 threads the bilayer; sequence FILTLLSILVVTFFLIVALSG. The Lumenal portion of the chain corresponds to 142–631; it reads GVGRRRKHVE…RPSLRAQSLR (490 aa). Asn-246, Asn-329, and Asn-364 each carry an N-linked (GlcNAc...) asparagine glycan. 384-386 contacts substrate; sequence HLR. Asn-398 and Asn-425 each carry an N-linked (GlcNAc...) asparagine glycan.

The protein belongs to the glycosyltransferase GT106 family. Ubiquitous. Strong expression in young seedlings, particularly at the junction between hypocotyl and root, in emerging cotyledons, and in parts of the roots. Also detected in the inflorescence (sepals, petals, mature pollen and siliques) and rosette leaves.

It localises to the golgi apparatus membrane. It participates in glycan metabolism. In terms of biological role, glycosyltransferase required for normal cell adhesion and cell wall integrity. This Arabidopsis thaliana (Mouse-ear cress) protein is Protein FRIABLE 1.